The chain runs to 125 residues: Protein ApaG (125 aa).

One can recognise an ApaG domain in the interval 1–125; that stretch reads MNDTPRVCVQ…FRLAIATHIH (125 aa).

The sequence is that of Protein ApaG from Erwinia tasmaniensis (strain DSM 17950 / CFBP 7177 / CIP 109463 / NCPPB 4357 / Et1/99).